The primary structure comprises 318 residues: Ribosomal RNA small subunit methyltransferase H (318 aa).

Residues 37–39 (GGH), Asp57, Phe83, Asp104, and Gln111 contribute to the S-adenosyl-L-methionine site.

This sequence belongs to the methyltransferase superfamily. RsmH family.

It is found in the cytoplasm. The catalysed reaction is cytidine(1402) in 16S rRNA + S-adenosyl-L-methionine = N(4)-methylcytidine(1402) in 16S rRNA + S-adenosyl-L-homocysteine + H(+). In terms of biological role, specifically methylates the N4 position of cytidine in position 1402 (C1402) of 16S rRNA. This Neisseria gonorrhoeae (strain NCCP11945) protein is Ribosomal RNA small subunit methyltransferase H.